The sequence spans 86 residues: Small ribosomal subunit protein bS20 (86 aa).

Positions methionine 1–lysine 25 are disordered.

It belongs to the bacterial ribosomal protein bS20 family.

Binds directly to 16S ribosomal RNA. This Mycobacterium leprae (strain Br4923) protein is Small ribosomal subunit protein bS20.